Consider the following 813-residue polypeptide: Valine--tRNA ligase (813 aa).

The short motif at 46–56 is the 'HIGH' region element; sequence PTVSGQLHIGH. The short motif at 536-540 is the 'KMSKS' region element; sequence KMSKS. Residue Lys539 coordinates ATP.

It belongs to the class-I aminoacyl-tRNA synthetase family. ValS type 2 subfamily. As to quaternary structure, monomer.

It is found in the cytoplasm. The catalysed reaction is tRNA(Val) + L-valine + ATP = L-valyl-tRNA(Val) + AMP + diphosphate. Catalyzes the attachment of valine to tRNA(Val). As ValRS can inadvertently accommodate and process structurally similar amino acids such as threonine, to avoid such errors, it has a 'posttransfer' editing activity that hydrolyzes mischarged Thr-tRNA(Val) in a tRNA-dependent manner. The protein is Valine--tRNA ligase of Rickettsia canadensis (strain McKiel).